The chain runs to 90 residues: Serine protease inhibitor Cvsi-1 (90 aa).

The first 19 residues, 1-19, serve as a signal peptide directing secretion; that stretch reads MDVVRTLILCVCLFGLTFA.

In terms of processing, contains 6 disulfide bonds. In terms of tissue distribution, detected in hemolymph (at protein level). In oysters collected in the summer the expression level is highest in the digestive gland with low levels of expression in gill, mantle, labial palp, style-sac midgut, gonad, heart, and hemocyte. In winter expression levels are higher in all tissues with highest expression levels observed in the digestive gland. Within the digestive gland expression is limited to the basophil cells of the digestive diverticula.

It is found in the secreted. Slow-binding inhibitor of serine proteases. The inhibitor rapidly binds to the protease forming a weak enzyme-inhibitor complex, and this is followed by a slow isomerization forming a tight-binding enzyme-inhibitor complex. Active against subtilisin A, perkinsin and trypsin with dissociation constants of 0.29 nM, 13.7 nM and 17.7 nM respectively. Not active against thermolysin, papain or pepsin. Has antiparasitic activity against the protozoan P.marinus. The chain is Serine protease inhibitor Cvsi-1 from Crassostrea virginica (Eastern oyster).